We begin with the raw amino-acid sequence, 368 residues long: Glutaminyl-peptide cyclotransferase (368 aa).

The N-terminal stretch at methionine 1–alanine 23 is a signal peptide. A glycan (N-linked (GlcNAc...) asparagine) is linked at asparagine 53. An intrachain disulfide couples cysteine 143 to cysteine 169. Aspartate 164 lines the Zn(2+) pocket. Catalysis depends on glutamate 207, which acts as the Proton acceptor. A Zn(2+)-binding site is contributed by glutamate 208. The Proton acceptor role is filled by aspartate 254. N-linked (GlcNAc...) asparagine glycosylation occurs at asparagine 292. Histidine 336 is a Zn(2+) binding site. An N-linked (GlcNAc...) asparagine glycan is attached at asparagine 352.

It belongs to the glutaminyl-peptide cyclotransferase family. As to expression, expressed by the venom gland.

It localises to the secreted. It catalyses the reaction N-terminal L-glutaminyl-[peptide] = N-terminal 5-oxo-L-prolyl-[peptide] + NH4(+). Responsible for the biosynthesis of pyroglutamyl peptides. Has a bias against acidic and tryptophan residues adjacent to the N-terminal glutaminyl residue and a lack of importance of chain length after the second residue. Also catalyzes N-terminal pyroglutamate formation. The sequence is that of Glutaminyl-peptide cyclotransferase (QPCT) from Boiga dendrophila (Mangrove snake).